The primary structure comprises 368 residues: 4-hydroxy-3-methylbut-2-en-1-yl diphosphate synthase (flavodoxin) (368 aa).

Residues C268, C271, C303, and E310 each contribute to the [4Fe-4S] cluster site.

This sequence belongs to the IspG family. [4Fe-4S] cluster serves as cofactor.

The catalysed reaction is (2E)-4-hydroxy-3-methylbut-2-enyl diphosphate + oxidized [flavodoxin] + H2O + 2 H(+) = 2-C-methyl-D-erythritol 2,4-cyclic diphosphate + reduced [flavodoxin]. Its pathway is isoprenoid biosynthesis; isopentenyl diphosphate biosynthesis via DXP pathway; isopentenyl diphosphate from 1-deoxy-D-xylulose 5-phosphate: step 5/6. Functionally, converts 2C-methyl-D-erythritol 2,4-cyclodiphosphate (ME-2,4cPP) into 1-hydroxy-2-methyl-2-(E)-butenyl 4-diphosphate. This is 4-hydroxy-3-methylbut-2-en-1-yl diphosphate synthase (flavodoxin) from Bacillus cytotoxicus (strain DSM 22905 / CIP 110041 / 391-98 / NVH 391-98).